The following is a 259-amino-acid chain: 3-deoxy-manno-octulosonate cytidylyltransferase (259 aa).

The protein belongs to the KdsB family.

The protein localises to the cytoplasm. It carries out the reaction 3-deoxy-alpha-D-manno-oct-2-ulosonate + CTP = CMP-3-deoxy-beta-D-manno-octulosonate + diphosphate. It functions in the pathway nucleotide-sugar biosynthesis; CMP-3-deoxy-D-manno-octulosonate biosynthesis; CMP-3-deoxy-D-manno-octulosonate from 3-deoxy-D-manno-octulosonate and CTP: step 1/1. Its pathway is bacterial outer membrane biogenesis; lipopolysaccharide biosynthesis. In terms of biological role, activates KDO (a required 8-carbon sugar) for incorporation into bacterial lipopolysaccharide in Gram-negative bacteria. This chain is 3-deoxy-manno-octulosonate cytidylyltransferase, found in Aeromonas salmonicida (strain A449).